Consider the following 475-residue polypeptide: Tryptophan--tRNA ligase, cytoplasmic (475 aa).

In terms of domain architecture, WHEP-TRS spans 12 to 68 (SPQELFSSIAAQGELVKSLKARKAPKEEIDSAVKMLLSLKTSYKEAMGEDYKADCPP). Residues 61–87 (DYKADCPPGNSTPDSHGDPEAVDDKED) form a disordered region. Lys-158 is modified (N6-succinyllysine). The short motif at 168-177 (PSSEAMHVGH) is the 'HIGH' region element. Positions 353-357 (KMSAS) match the 'KMSKS' region motif. Residue Ser-355 is modified to Phosphoserine.

It belongs to the class-I aminoacyl-tRNA synthetase family. As to quaternary structure, homodimer. Interacts with oxidized form of GAPDH. Post-translationally, proteolytic cleavage generates 2 forms; T1-TrpRS and T2-TrpRS.

The protein localises to the cytoplasm. The catalysed reaction is tRNA(Trp) + L-tryptophan + ATP = L-tryptophyl-tRNA(Trp) + AMP + diphosphate + H(+). Its function is as follows. Catalyzes the attachment of tryptophan to tRNA(Trp) in a two-step reaction: tryptophan is first activated by ATP to form Trp-AMP and then transferred to the acceptor end of the tRNA(Trp). Could also possess an angiostatic activity. This Oryctolagus cuniculus (Rabbit) protein is Tryptophan--tRNA ligase, cytoplasmic (WARS1).